We begin with the raw amino-acid sequence, 607 residues long: Elongation factor 4 (607 aa).

Positions 11 to 193 (ENIRNFSIIA…KIVEVVPAPD (183 aa)) constitute a tr-type G domain. Residues 23 to 28 (DHGKST) and 140 to 143 (NKID) contribute to the GTP site.

It belongs to the TRAFAC class translation factor GTPase superfamily. Classic translation factor GTPase family. LepA subfamily.

The protein localises to the cell membrane. It catalyses the reaction GTP + H2O = GDP + phosphate + H(+). In terms of biological role, required for accurate and efficient protein synthesis under certain stress conditions. May act as a fidelity factor of the translation reaction, by catalyzing a one-codon backward translocation of tRNAs on improperly translocated ribosomes. Back-translocation proceeds from a post-translocation (POST) complex to a pre-translocation (PRE) complex, thus giving elongation factor G a second chance to translocate the tRNAs correctly. Binds to ribosomes in a GTP-dependent manner. The protein is Elongation factor 4 of Staphylococcus aureus (strain N315).